Reading from the N-terminus, the 65-residue chain is Small ribosomal subunit protein bS21A (65 aa).

This sequence belongs to the bacterial ribosomal protein bS21 family.

The polypeptide is Small ribosomal subunit protein bS21A (Francisella tularensis subsp. tularensis (strain FSC 198)).